Here is a 375-residue protein sequence, read N- to C-terminus: Decapping and exoribonuclease protein Rai1 (375 aa).

Substrate-binding positions include Arg-43 and 120–122; that span reads LRG. Mg(2+) contacts are provided by Glu-180, Glu-222, Asp-224, Glu-247, and Leu-248. Residue Glu-222 participates in substrate binding. Substrate-binding residues include Lys-249 and Gln-274.

The protein belongs to the DXO/Dom3Z family. Interacts with Rat1. The cofactor is Mg(2+).

It carries out the reaction a 5'-end triphospho-ribonucleoside in mRNA + H2O = a 5'-end phospho-ribonucleoside in mRNA + diphosphate + H(+). It catalyses the reaction a 5'-end NAD(+)-phospho-ribonucleoside in mRNA + H2O = a 5'-end phospho-ribonucleoside in mRNA + NAD(+) + H(+). The enzyme catalyses a 5'-end (N(7)-methyl 5'-triphosphoguanosine)-ribonucleoside-ribonucleotide in mRNA + H2O = a (N(7)-methyl 5'-triphosphoguanosine)-nucleoside + a 5'-end phospho-ribonucleoside in mRNA + H(+). Its function is as follows. Decapping enzyme for NAD-capped RNAs: specifically hydrolyzes the nicotinamide adenine dinucleotide (NAD) cap from a subset of RNAs by removing the entire NAD moiety from the 5'-end of an NAD-capped RNA. The NAD-cap is present at the 5'-end of some RNAs and snoRNAs. In contrast to the canonical 5'-end N7 methylguanosine (m7G) cap, the NAD cap promotes mRNA decay. Also acts as a non-canonical decapping enzyme that removes the entire cap structure of m7G capped or incompletely capped RNAs and mediates their subsequent degradation. Specifically degrades pre-mRNAs with a defective 5'-end m7G cap and is part of a pre-mRNA capping quality control. Possesses 5'-pyrophosphohydrolase activity, hydrolyzing the 5'-end triphosphate to release pyrophosphates, and 5'-3' exonuclease activity. May be involved in RNA degradation in the nucleus. This Drosophila melanogaster (Fruit fly) protein is Decapping and exoribonuclease protein Rai1.